A 237-amino-acid chain; its full sequence is DCN1-like protein 5 (237 aa).

The residue at position 41 (S41) is a Phosphoserine; by IKKA. One can recognise a DCUN1 domain in the interval 46–232 (FSRKKCLAWF…LLDEFVEWQK (187 aa)).

Part of a complex that contains DCUN1D5, CUL1 and RBX1; this interaction is bridged by CUL1. Interacts (via the DCUN1 domain) with the unneddylated cullins: interacts with CUL1, CUL2, CUL3, CUL4A, CUL4B and CUL5; these interactions promote the cullin neddylation and the identity of the cullin dictates the affinity of the interaction. Interacts (via DCUN1 domain) with UBE2M (N-terminally acetylated form) and probably with UBE2F (N-terminally acetylated form). May also interact with regulators or subunits of cullin-RING ligases such as RBX1, RNF7, ELOB and DDB1; these interactions are bridged by cullins. Interacts with CAND1; this interaction is bridged by cullins and strongly inhibits the neddylation of cullins. These CAND-cullin-DCNL complexes can only be neddylated in the presence of a substrate adapter. Phosphorylation at Ser-41 is independent of cullin's interaction. Phosphorylated in response to both TICAM1 and MYD88 dependent Toll-like receptor (TLR) pathway activation. Phosphorylated in response to IL1B stimulation. Highly expressed in testis. Lower levels of expression in skin, thymus, spleen, lymph nodes, lung, brain, heart, skeletal muscles, kidney, liver an ovary.

It is found in the nucleus. It localises to the cytoplasm. Its subcellular location is the cytoskeleton. The protein resides in the spindle. In terms of biological role, contributes to the neddylation of all cullins by transferring NEDD8 from N-terminally acetylated NEDD8-conjugating E2s enzyme to different cullin C-terminal domain-RBX complexes which is necessary for the activation of cullin-RING E3 ubiquitin ligases (CRLs). May play a role in DNA damage response and may participate in cell proliferation and anchorage-independent cell growth. The chain is DCN1-like protein 5 from Mus musculus (Mouse).